Here is a 617-residue protein sequence, read N- to C-terminus: Probable potassium transport system protein Kup 3 (617 aa).

A run of 11 helical transmembrane segments spans residues 42 to 62, 95 to 115, 129 to 149, 160 to 180, 206 to 226, 240 to 260, 282 to 302, 330 to 350, 360 to 380, 386 to 406, and 411 to 431; these read VASLILWALLLIISLKYALLI, LVVGLVGAALLYGDGAITPAI, PSLAPAVVPVTVVILVGLFMM, IFGPVMLAWFAVLAALGIHGI, VSFAILGAAFLAVTGGEAMYA, WFAICLPALVLNYFGQAALLI, LVAFSAVATVIASQAIISGVF, IYVPLVNWLLAAATLGAVLSF, YGIAVSLLMAITTLLAALVAI, PWLVVAVNGAFFVIDVIFFSA, and LFEGGWFPLLLAALVAFMMLT.

Belongs to the HAK/KUP transporter (TC 2.A.72) family.

It is found in the cell inner membrane. It catalyses the reaction K(+)(in) + H(+)(in) = K(+)(out) + H(+)(out). In terms of biological role, transport of potassium into the cell. Likely operates as a K(+):H(+) symporter. The sequence is that of Probable potassium transport system protein Kup 3 from Bradyrhizobium diazoefficiens (strain JCM 10833 / BCRC 13528 / IAM 13628 / NBRC 14792 / USDA 110).